We begin with the raw amino-acid sequence, 106 residues long: Transcriptional and immune response regulator (106 aa).

Monomer. Interacts with NOTCH2 (via ANK repeats), the interaction inhibits the nuclear translocation of NOTCH2 N2ICD. Interacts (C-terminus) with CBY1 (C-terminus), TCIM competes with CTNNB1 for the interaction with CBY1.

The protein resides in the cytoplasm. The protein localises to the nucleus. It localises to the nucleolus. It is found in the nucleus speckle. In terms of biological role, seems to be involved in the regulation of cell growth an differentiation, may play different and opposite roles depending on the tissue or cell type. May enhance the WNT-CTNNB1 pathway by relieving antagonistic activity of CBY1. Enhances the proliferation of follicular dendritic cells. Plays a role in the mitogen-activated MAPK2/3 signaling pathway, positively regulates G1-to-S-phase transition of the cell cycle. In endothelial cells, enhances key inflammatory mediators and inflammatory response through the modulation of NF-kappaB transcriptional regulatory activity. Involved in the regulation of heat shock response, seems to play a positive feedback with HSF1 to modulate heat-shock downstream gene expression. Plays a role in the regulation of hematopoiesis even if the mechanisms are unknown. In cancers such as thyroid or lung cancer, it has been described as promoter of cell proliferation, G1-to-S-phase transition and inhibitor of apoptosis. However, it negatively regulates self-renewal of liver cancer cells via suppresion of NOTCH2 signaling. The protein is Transcriptional and immune response regulator (TCIM) of Bos taurus (Bovine).